A 261-amino-acid chain; its full sequence is tRNA pseudouridine synthase A (261 aa).

The Nucleophile role is filled by Asp-52. Residue Tyr-111 coordinates substrate.

Belongs to the tRNA pseudouridine synthase TruA family. Homodimer.

It catalyses the reaction uridine(38/39/40) in tRNA = pseudouridine(38/39/40) in tRNA. In terms of biological role, formation of pseudouridine at positions 38, 39 and 40 in the anticodon stem and loop of transfer RNAs. In Jannaschia sp. (strain CCS1), this protein is tRNA pseudouridine synthase A.